A 74-amino-acid polypeptide reads, in one-letter code: ATP synthase subunit 9, mitochondrial (74 aa).

A run of 2 helical transmembrane segments spans residues methionine 8 to phenylalanine 28 and isoleucine 50 to isoleucine 70.

Belongs to the ATPase C chain family. F-type ATPases have 2 components, CF(1) - the catalytic core - and CF(0) - the membrane proton channel. CF(1) has five subunits: alpha(3), beta(3), gamma(1), delta(1), epsilon(1). CF(0) has three main subunits: a, b and c.

The protein localises to the mitochondrion membrane. This protein is one of the chains of the nonenzymatic membrane component (F0) of mitochondrial ATPase. This is ATP synthase subunit 9, mitochondrial (ATP9) from Solanum lycopersicum (Tomato).